The chain runs to 138 residues: ATP synthase epsilon chain (138 aa).

Belongs to the ATPase epsilon chain family. In terms of assembly, F-type ATPases have 2 components, CF(1) - the catalytic core - and CF(0) - the membrane proton channel. CF(1) has five subunits: alpha(3), beta(3), gamma(1), delta(1), epsilon(1). CF(0) has three main subunits: a, b and c.

It is found in the cell inner membrane. Functionally, produces ATP from ADP in the presence of a proton gradient across the membrane. The polypeptide is ATP synthase epsilon chain (Geotalea daltonii (strain DSM 22248 / JCM 15807 / FRC-32) (Geobacter daltonii)).